We begin with the raw amino-acid sequence, 155 residues long: S-ribosylhomocysteine lyase (155 aa).

Fe cation-binding residues include H53, H57, and C121.

Belongs to the LuxS family. As to quaternary structure, homodimer. Fe cation is required as a cofactor.

The enzyme catalyses S-(5-deoxy-D-ribos-5-yl)-L-homocysteine = (S)-4,5-dihydroxypentane-2,3-dione + L-homocysteine. Involved in the synthesis of autoinducer 2 (AI-2) which is secreted by bacteria and is used to communicate both the cell density and the metabolic potential of the environment. The regulation of gene expression in response to changes in cell density is called quorum sensing. Catalyzes the transformation of S-ribosylhomocysteine (RHC) to homocysteine (HC) and 4,5-dihydroxy-2,3-pentadione (DPD). The protein is S-ribosylhomocysteine lyase of Thermus thermophilus (strain ATCC BAA-163 / DSM 7039 / HB27).